Consider the following 88-residue polypeptide: uncharacterized protein (88 aa).

2 helical membrane-spanning segments follow: residues 27–46 and 61–83; these read LFIFRVLNVVSIAILFETPH and SMCLYNCYCLYNVVTFSLNLILI.

It localises to the membrane. This is an uncharacterized protein from Saccharomyces cerevisiae (strain ATCC 204508 / S288c) (Baker's yeast).